Reading from the N-terminus, the 248-residue chain is Granzyme C (248 aa).

A signal peptide spans M1–A18. The propeptide occupies E19 to E20. The Peptidase S1 domain occupies I21–K246. C50 and C66 form a disulfide bridge. Catalysis depends on charge relay system residues H65 and D109. Cystine bridges form between C143/C210 and C174/C189. S204 functions as the Charge relay system in the catalytic mechanism.

It belongs to the peptidase S1 family. Granzyme subfamily.

The protein resides in the cytolytic granule. In terms of biological role, this enzyme is probably necessary for target cell lysis in cell-mediated immune responses. The protein is Granzyme C (Gzmc) of Mus musculus (Mouse).